The chain runs to 120 residues: Large ribosomal subunit protein uL18 (120 aa).

Belongs to the universal ribosomal protein uL18 family. As to quaternary structure, part of the 50S ribosomal subunit; part of the 5S rRNA/L5/L18/L25 subcomplex. Contacts the 5S and 23S rRNAs.

Its function is as follows. This is one of the proteins that bind and probably mediate the attachment of the 5S RNA into the large ribosomal subunit, where it forms part of the central protuberance. The protein is Large ribosomal subunit protein uL18 of Herminiimonas arsenicoxydans.